The primary structure comprises 297 residues: Heme A synthase (297 aa).

Over 1–6 (MNRKLS) the chain is Cytoplasmic. A helical membrane pass occupies residues 7 to 27 (IFSAFVTFTMMIVLLMGGTVT). Residues 28-62 (KTDSGNGCGTDWPLCHGELIPTNPSVETMIEYSHR) lie on the Extracellular side of the membrane. Cysteines 35 and 42 form a disulfide. E58 is an active-site residue. Residue H61 participates in heme o binding. Residues 63-83 (AVTGVVGLLIIALCLWTLVAF) form a helical membrane-spanning segment. Residues 84–90 (KDRLDIK) are Cytoplasmic-facing. The chain crosses the membrane as a helical span at residues 91–111 (IFAFLAFIFMLIQSIVGAGAV). Over 112-121 (VWQQSDLVMA) the chain is Extracellular. The helical transmembrane segment at 122 to 142 (LHFGISLISFASLLILTILIM) threads the bilayer. H123 contributes to the heme o binding site. The Cytoplasmic segment spans residues 143 to 160 (ERSGQEFRESVPAFLRKL). A helical transmembrane segment spans residues 161–181 (LYGLLIYTLIVVYTGAFVRHV). Residues 182 to 201 (GATYACVGWPVCSQPTMTFE) are Extracellular-facing. A disulfide bridge links C187 with C193. Residues 202-222 (AWVQMIHRILAGLLFFYTLFV) traverse the membrane as a helical segment. H208 is a binding site for heme b. Residues 223–236 (HYTAIRLKHRTSRT) are Cytoplasmic-facing. Residues 237 to 257 (GMLFATFFISCQVATGAWIVL) form a helical membrane-spanning segment. Over 258 to 262 (GGHAT) the chain is Extracellular. Residues 263–283 (YVPLLHAFLITCYFGVISYLA) traverse the membrane as a helical segment. H268 contacts heme b. Residues 284 to 297 (YHAFRTRKKDSRLR) are Cytoplasmic-facing.

This sequence belongs to the COX15/CtaA family. Type 1 subfamily. Interacts with CtaB. The cofactor is heme b.

The protein resides in the cell membrane. The enzyme catalyses Fe(II)-heme o + 2 A + H2O = Fe(II)-heme a + 2 AH2. Its pathway is porphyrin-containing compound metabolism; heme A biosynthesis; heme A from heme O: step 1/1. In terms of biological role, catalyzes the conversion of heme O to heme A by two successive hydroxylations of the methyl group at C8. The first hydroxylation forms heme I, the second hydroxylation results in an unstable dihydroxymethyl group, which spontaneously dehydrates, resulting in the formyl group of heme A. The protein is Heme A synthase of Exiguobacterium sibiricum (strain DSM 17290 / CCUG 55495 / CIP 109462 / JCM 13490 / 255-15).